A 241-amino-acid polypeptide reads, in one-letter code: Small ribosomal subunit protein uS2 (241 aa).

It belongs to the universal ribosomal protein uS2 family.

The protein is Small ribosomal subunit protein uS2 of Pectobacterium atrosepticum (strain SCRI 1043 / ATCC BAA-672) (Erwinia carotovora subsp. atroseptica).